We begin with the raw amino-acid sequence, 179 residues long: Transcription factor 21 (179 aa).

Residues 19–88 (DCDSLKVDSN…VQRNAANARE (70 aa)) form a disordered region. Polar residues-rich tracts occupy residues 30–49 (EFGT…NGSP) and 70–80 (SGVSQEGKQVQ). The 53-residue stretch at 79–131 (VQRNAANARERARMRVLSKAFSRLKTTLPWVPPDTKLSKLDTLRLASSYIAHL) folds into the bHLH domain.

In terms of assembly, efficient DNA binding requires dimerization with another bHLH protein. Forms a heterodimer with TCF3 and binds the E box (5'-CANNTG-3'). Expressed at high levels in lung, kidney, gut, heart, ovary and podocytes (visceral glomerular epithelial cells). Also found in spleen, large intestine, uterus, bladder and testis.

The protein resides in the nucleus. Functionally, involved in epithelial-mesenchymal interactions in kidney and lung morphogenesis that include epithelial differentiation and branching morphogenesis. May be involved in the organogenesis of the spleen and heart and in cardiac and coronary artery development. May function in the development and sex differentiation of gonad via transcriptional regulation of AD4BP/SF-1. This chain is Transcription factor 21 (Tcf21), found in Mus musculus (Mouse).